Here is a 239-residue protein sequence, read N- to C-terminus: 7-cyano-7-deazaguanine synthase (239 aa).

Position 13-23 (13-23) interacts with ATP; the sequence is FSGGQDSTTCL. Residues Cys-192, Cys-201, Cys-204, and Cys-207 each coordinate Zn(2+).

It belongs to the QueC family. Zn(2+) serves as cofactor.

The catalysed reaction is 7-carboxy-7-deazaguanine + NH4(+) + ATP = 7-cyano-7-deazaguanine + ADP + phosphate + H2O + H(+). The protein operates within purine metabolism; 7-cyano-7-deazaguanine biosynthesis. Functionally, catalyzes the ATP-dependent conversion of 7-carboxy-7-deazaguanine (CDG) to 7-cyano-7-deazaguanine (preQ(0)). The sequence is that of 7-cyano-7-deazaguanine synthase from Shewanella sp. (strain MR-7).